Consider the following 274-residue polypeptide: MADPMGGAGRLPAVFMTPGTSSFTDFLSQSAPHLLPGARGGLPGPVTEVAHGTTIVAVTFPGGVIMAGDRRATQGHMIAQRDVEKVHHADDFSCVGYAGTAGVGAELIRLFQVELEHYEKIEGATLSLDAKANRLAAMVKGNLPMALQGLAVVPLFAGYDPDLDKGRIFSYDIAAAKSEERTYESIGSGSVFAKGSLKKRFRVDLTQDDAVRIAVEALYDAADDDSATGGPDTIRKLYPIVASVTSDGYRRYGDDEVEPVVTAIIADRSTSAGG.

Positions 1-52 are cleaved as a propeptide — removed in mature form; by autocatalysis; that stretch reads MADPMGGAGRLPAVFMTPGTSSFTDFLSQSAPHLLPGARGGLPGPVTEVAHG. Thr53 (nucleophile) is an active-site residue.

This sequence belongs to the peptidase T1B family. The 20S proteasome core is composed of 14 alpha and 14 beta subunits that assemble into four stacked heptameric rings, resulting in a barrel-shaped structure. The two inner rings, each composed of seven catalytic beta subunits, are sandwiched by two outer rings, each composed of seven alpha subunits. The catalytic chamber with the active sites is on the inside of the barrel. Has a gated structure, the ends of the cylinder being occluded by the N-termini of the alpha-subunits. Is capped by the proteasome-associated ATPase, ARC.

Its subcellular location is the cytoplasm. The catalysed reaction is Cleavage of peptide bonds with very broad specificity.. It participates in protein degradation; proteasomal Pup-dependent pathway. With respect to regulation, the formation of the proteasomal ATPase ARC-20S proteasome complex, likely via the docking of the C-termini of ARC into the intersubunit pockets in the alpha-rings, may trigger opening of the gate for substrate entry. Interconversion between the open-gate and close-gate conformations leads to a dynamic regulation of the 20S proteasome proteolysis activity. In terms of biological role, component of the proteasome core, a large protease complex with broad specificity involved in protein degradation. This Frankia alni (strain DSM 45986 / CECT 9034 / ACN14a) protein is Proteasome subunit beta.